Here is a 216-residue protein sequence, read N- to C-terminus: MSELKIKAAKAAIAYIEDDMVIGVGTGSTVNFFIKELAAIKHKIEACVASSKATEALLRAEGIPVIDLNSVQDLPIYVDGADEVNERGEMIKGGGGALTREKIVANVATQFICIVDESKVVKRLGEFPVAVEVIPMARSFVARQIVKLGGDPEYREGFVTDNGNIILDVFNLSFSTPMALEDSLNVIPGVVENGVFAKRLADKVLVASASGVNNLK.

Substrate is bound by residues 26–29 (TGST), 79–82 (DGAD), and 92–95 (KGGG). The Proton acceptor role is filled by E101. A substrate-binding site is contributed by K119.

This sequence belongs to the ribose 5-phosphate isomerase family. In terms of assembly, homodimer.

The enzyme catalyses aldehydo-D-ribose 5-phosphate = D-ribulose 5-phosphate. It functions in the pathway carbohydrate degradation; pentose phosphate pathway; D-ribose 5-phosphate from D-ribulose 5-phosphate (non-oxidative stage): step 1/1. In terms of biological role, catalyzes the reversible conversion of ribose-5-phosphate to ribulose 5-phosphate. The protein is Ribose-5-phosphate isomerase A of Legionella pneumophila subsp. pneumophila (strain Philadelphia 1 / ATCC 33152 / DSM 7513).